The sequence spans 1213 residues: Filamin-A-interacting protein 1 (1213 aa).

The disordered stretch occupies residues 1 to 70 (MRSRNQGGES…TSGECERKTK (70 aa)). Basic and acidic residues predominate over residues 61 to 70 (TSGECERKTK). S138 is modified (phosphoserine). Coiled coils occupy residues 192–591 (DYMN…ELSC) and 624–781 (PEDN…LSKR). Disordered regions lie at residues 878 to 900 (NGPSITQEKGPRTNSSPGHPGEV) and 949 to 976 (KPRITIIPSPNVMPQKQKSGDTTLGPER). Polar residues-rich tracts occupy residues 880–894 (PSITQEKGPRTNSSP) and 960–970 (VMPQKQKSGDT). S979 bears the Phosphoserine mark. The segment at 1103-1213 (VSTGTVLRSP…STTSLGGGKG (111 aa)) is disordered. Over residues 1125-1138 (VTSTITITPVTTSS) the composition is skewed to low complexity. The segment covering 1139-1156 (ARGTQSVSGQDGSSQRPT) has biased composition (polar residues). Low complexity predominate over residues 1168 to 1179 (AGKPVVAAPGAG).

This sequence belongs to the FILIP1 family. As to quaternary structure, interacts with FLNA. Interacts with RHOD (in GTP-bound form). As to expression, moderately expressed in adult heart and brain. Weakly expressed in lung, skeletal muscle, ovary, testis, kidney, and fetal brain, and hardly detectable in liver, pancreas, spleen, and fetal liver. Within brain, moderate expression is found in amygdala and caudate nucleus. Expressed in skin fibroblasts.

It is found in the cytoplasm. The protein resides in the cytoskeleton. Functionally, by acting through a filamin-A/F-actin axis, it controls the start of neocortical cell migration from the ventricular zone. May be able to induce the degradation of filamin-A. The polypeptide is Filamin-A-interacting protein 1 (FILIP1) (Homo sapiens (Human)).